The sequence spans 317 residues: Inositol oxygenase 2 (317 aa).

Substrate is bound by residues arginine 57 and 115-117 (DES). Fe cation-binding residues include histidine 128, histidine 153, and aspartate 154. Residues lysine 157 and 174–175 (GD) each bind substrate. Histidine 226, histidine 252, and aspartate 285 together coordinate Fe cation. A substrate-binding site is contributed by 252 to 253 (HS).

The protein belongs to the myo-inositol oxygenase family. It depends on Fe cation as a cofactor. Expressed mainly in roots, stems, flowers and siliques. Low expression in leaves.

It localises to the cytoplasm. It catalyses the reaction myo-inositol + O2 = D-glucuronate + H2O + H(+). It participates in polyol metabolism; myo-inositol degradation into D-glucuronate; D-glucuronate from myo-inositol: step 1/1. In terms of biological role, involved in the biosynthesis of UDP-glucuronic acid (UDP-GlcA), providing nucleotide sugars for cell-wall polymers. May be also involved in plant ascorbate biosynthesis. This Arabidopsis thaliana (Mouse-ear cress) protein is Inositol oxygenase 2 (MIOX2).